The sequence spans 126 residues: Protein ApaG (126 aa).

The ApaG domain occupies 2-126; sequence SDPRYQIDVS…FRLAVPGALH (125 aa).

This is Protein ApaG from Azotobacter vinelandii (strain DJ / ATCC BAA-1303).